The following is a 96-amino-acid chain: UPF0213 protein Lreu_0682 (96 aa).

The region spanning 4-81 (EKYYIYVLYC…KHQTRRQKEK (78 aa)) is the GIY-YIG domain.

The protein belongs to the UPF0213 family.

This chain is UPF0213 protein Lreu_0682, found in Limosilactobacillus reuteri (strain DSM 20016) (Lactobacillus reuteri).